A 434-amino-acid polypeptide reads, in one-letter code: UDP-N-acetylglucosamine 1-carboxyvinyltransferase (434 aa).

22–23 (KN) is a binding site for phosphoenolpyruvate. Arginine 97 contributes to the UDP-N-acetyl-alpha-D-glucosamine binding site. The active-site Proton donor is aspartate 121. Aspartate 319 and methionine 341 together coordinate UDP-N-acetyl-alpha-D-glucosamine.

It belongs to the EPSP synthase family. MurA subfamily.

The protein resides in the cytoplasm. It carries out the reaction phosphoenolpyruvate + UDP-N-acetyl-alpha-D-glucosamine = UDP-N-acetyl-3-O-(1-carboxyvinyl)-alpha-D-glucosamine + phosphate. It functions in the pathway cell wall biogenesis; peptidoglycan biosynthesis. Its function is as follows. Cell wall formation. Adds enolpyruvyl to UDP-N-acetylglucosamine. The sequence is that of UDP-N-acetylglucosamine 1-carboxyvinyltransferase from Bacteroides thetaiotaomicron (strain ATCC 29148 / DSM 2079 / JCM 5827 / CCUG 10774 / NCTC 10582 / VPI-5482 / E50).